The sequence spans 375 residues: S-adenosylmethionine:tRNA ribosyltransferase-isomerase (375 aa).

The protein belongs to the QueA family. In terms of assembly, monomer.

It is found in the cytoplasm. It catalyses the reaction 7-aminomethyl-7-carbaguanosine(34) in tRNA + S-adenosyl-L-methionine = epoxyqueuosine(34) in tRNA + adenine + L-methionine + 2 H(+). It participates in tRNA modification; tRNA-queuosine biosynthesis. Transfers and isomerizes the ribose moiety from AdoMet to the 7-aminomethyl group of 7-deazaguanine (preQ1-tRNA) to give epoxyqueuosine (oQ-tRNA). The chain is S-adenosylmethionine:tRNA ribosyltransferase-isomerase from Rickettsia typhi (strain ATCC VR-144 / Wilmington).